Reading from the N-terminus, the 901-residue chain is Probable dipeptidyl-aminopeptidase B (901 aa).

Low complexity predominate over residues 1–22 (MSSPRPSTSSTSSDSGLSVDTT). The interval 1-67 (MSSPRPSTSS…EPFLPSAKKQ (67 aa)) is disordered. The Cytoplasmic segment spans residues 1–76 (MSSPRPSTSS…QAASGSRTSR (76 aa)). The helical; Signal-anchor for type II membrane protein transmembrane segment at 77-97 (LIWGLVILCVAGWLWGLVLFV) threads the bilayer. The Vacuolar segment spans residues 98-901 (TQNRSAQQSV…VKRSLPMLVK (804 aa)). 2 N-linked (GlcNAc...) asparagine glycosylation sites follow: Asn334 and Asn625. Ser739 functions as the Charge relay system in the catalytic mechanism. An N-linked (GlcNAc...) asparagine glycan is attached at Asn793. Catalysis depends on charge relay system residues Asp816 and His849.

It belongs to the peptidase S9B family.

It localises to the vacuole membrane. The catalysed reaction is Release of an N-terminal dipeptide, Xaa-Yaa-|-Zaa-, from a polypeptide, preferentially when Yaa is Pro, provided Zaa is neither Pro nor hydroxyproline.. Its function is as follows. Type IV dipeptidyl-peptidase which removes N-terminal dipeptides sequentially from polypeptides having unsubstituted N-termini provided that the penultimate residue is proline. In Aspergillus niger (strain ATCC MYA-4892 / CBS 513.88 / FGSC A1513), this protein is Probable dipeptidyl-aminopeptidase B (dapB).